Reading from the N-terminus, the 550-residue chain is MSHGPSPRLAESPQLSKGSLLTILGSPSPERMGPADSLPPTPPSGTPSPGPPPALPLPPAPALLADGDWESREELRLRELEEARARAAQMEKTMRRWSDCTANWREKWSKVRAERNRAREEVRQLRQRLDALTKELAGARRERQEAQGECEARGRELARLRGARGVADQTRDGPEPEAEREPVRDVGSERPPGSQELELVESLLKSMPEESEDCWEARSLGAGGPRGSSGRQERSRLPWEDTAATEEEASKLTALRLRLDESQKVLLKEREDKLALSRNIEKLEGELSQWKIKYEELSKTKQEMLKQLSILKEAHQDELGRMSEDLEDELGARSSMDRKMAELRGEMERLQAENAAEWGRRERLETEKLGLERENKKLRAQVGDLEEALARRRRQTASALDCDLRASQAALFEKNKELADLKHVHGKLKKQFQEKVAELAHANRRVEQHEAEVKKLRLRVEELKKELAQAEDELDEAHNQARKLQRSLDEQTEQSENLQVQLEHLQSRLRRQQQNAPLFGKIRSARFGTEEAEDGTSDLDEDEDLQIQVA.

2 disordered regions span residues 1 to 69 and 138 to 247; these read MSHG…DGDW and GARR…ATEE. 3 positions are modified to phosphoserine: Ser12, Ser26, and Ser28. The segment covering 37 to 61 has biased composition (pro residues); the sequence is SLPPTPPSGTPSPGPPPALPLPPAP. Residues 72–161 adopt a coiled-coil conformation; that stretch reads REELRLRELE…ARGRELARLR (90 aa). Composition is skewed to basic and acidic residues over residues 138-159 and 169-188; these read GARR…ELAR and QTRD…DVGS. 2 coiled-coil regions span residues 263-396 and 427-518; these read QKVL…RRQT and KLKK…NAPL. Disordered regions lie at residues 472–497 and 509–550; these read DELD…QSEN and LRRQ…IQVA. The span at 530-550 shows a compositional bias: acidic residues; it reads EEAEDGTSDLDEDEDLQIQVA. Ser537 bears the Phosphoserine mark.

This is Coiled-coil domain-containing protein 102A (CCDC102A) from Homo sapiens (Human).